The chain runs to 264 residues: Thymidylate synthase (264 aa).

A dUMP-binding site is contributed by Arg21. His51 serves as a coordination point for (6R)-5,10-methylene-5,6,7,8-tetrahydrofolate. Residue 126-127 (RR) participates in dUMP binding. The Nucleophile role is filled by Cys146. Residues 166–169 (RSAD), Asn177, and 207–209 (HIY) each bind dUMP. Asp169 serves as a coordination point for (6R)-5,10-methylene-5,6,7,8-tetrahydrofolate. (6R)-5,10-methylene-5,6,7,8-tetrahydrofolate is bound at residue Ala263.

It belongs to the thymidylate synthase family. Bacterial-type ThyA subfamily. In terms of assembly, homodimer.

The protein localises to the cytoplasm. It catalyses the reaction dUMP + (6R)-5,10-methylene-5,6,7,8-tetrahydrofolate = 7,8-dihydrofolate + dTMP. It participates in pyrimidine metabolism; dTTP biosynthesis. Catalyzes the reductive methylation of 2'-deoxyuridine-5'-monophosphate (dUMP) to 2'-deoxythymidine-5'-monophosphate (dTMP) while utilizing 5,10-methylenetetrahydrofolate (mTHF) as the methyl donor and reductant in the reaction, yielding dihydrofolate (DHF) as a by-product. This enzymatic reaction provides an intracellular de novo source of dTMP, an essential precursor for DNA biosynthesis. In Rhizobium meliloti (strain 1021) (Ensifer meliloti), this protein is Thymidylate synthase.